Consider the following 440-residue polypeptide: tRNA (guanine(37)-N(1))-methyltransferase (440 aa).

S-adenosyl-L-methionine contacts are provided by residues histidine 217, 255–256 (DL), 283–284 (DG), and asparagine 315.

Belongs to the class I-like SAM-binding methyltransferase superfamily. TRM5/TYW2 family. In terms of assembly, monomer.

The protein resides in the mitochondrion matrix. The protein localises to the nucleus. It localises to the cytoplasm. It catalyses the reaction guanosine(37) in tRNA + S-adenosyl-L-methionine = N(1)-methylguanosine(37) in tRNA + S-adenosyl-L-homocysteine + H(+). Specifically methylates the N1 position of guanosine-37 in various cytoplasmic and mitochondrial tRNAs. Methylation is not dependent on the nature of the nucleoside 5' of the target nucleoside. This is the first step in the biosynthesis of wybutosine (yW), a modified base adjacent to the anticodon of tRNAs and required for accurate decoding. In Drosophila pseudoobscura pseudoobscura (Fruit fly), this protein is tRNA (guanine(37)-N(1))-methyltransferase.